An 87-amino-acid polypeptide reads, in one-letter code: LYR motif-containing protein 2 (87 aa).

The N-terminal 19 residues, 1 to 19 (MGSRLPPAALTLKQFLVRQ), are a transit peptide targeting the mitochondrion.

The protein belongs to the complex I LYR family.

The protein resides in the mitochondrion. Involved in efficient integration of the N-module into mitochondrial respiratory chain complex I. The protein is LYR motif-containing protein 2 (lyrm2) of Xenopus laevis (African clawed frog).